The sequence spans 122 residues: Large ribosomal subunit protein uL14 (122 aa).

Belongs to the universal ribosomal protein uL14 family. Part of the 50S ribosomal subunit. Forms a cluster with proteins L3 and L19. In the 70S ribosome, L14 and L19 interact and together make contacts with the 16S rRNA in bridges B5 and B8.

In terms of biological role, binds to 23S rRNA. Forms part of two intersubunit bridges in the 70S ribosome. This Finegoldia magna (strain ATCC 29328 / DSM 20472 / WAL 2508) (Peptostreptococcus magnus) protein is Large ribosomal subunit protein uL14.